We begin with the raw amino-acid sequence, 561 residues long: Zinc finger protein 37A (561 aa).

Residues 8 to 79 (VSFRDVTVGF…EEKFPSQSHL (72 aa)) form the KRAB domain. A C2H2-type 1; degenerate zinc finger spans residues 146-168 (FEYNECGKAFPENSLFLVHKRGY). The segment at 243–265 (IEYNECGTFFSEKLVLHLQQRTH) adopts a C2H2-type 2; degenerate zinc-finger fold. 10 C2H2-type zinc fingers span residues 271-293 (YECH…QRTH), 299-321 (YECH…QRIH), 327-349 (YGCH…QRTH), 355-377 (YECH…QKTH), 383-405 (YECY…QRIH), 411-433 (YECN…LRTH), 439-461 (YECI…LRRH), 467-489 (FGCN…QRTH), 495-517 (YGCN…HRTH), and 523-545 (YECN…QRIH).

It belongs to the krueppel C2H2-type zinc-finger protein family.

The protein localises to the nucleus. In terms of biological role, may be involved in transcriptional regulation. This is Zinc finger protein 37A (ZNF37A) from Homo sapiens (Human).